The primary structure comprises 173 residues: MSIILGIDPGSRVTGYGVIRQTGRQLTYLGSGCIRTSVTDLPSRLKLIYAGVSEIITQFRPDYFAIEQVFMAKNADSALKLGQARGAAIVAAVNHDLPVFEYAARQVKQTVVGIGSAEKSQVQHMVRTLLKLSANPQADAADALAIAITHCHVSQNATQVSESRLNLARGRLR.

Catalysis depends on residues Asp8, Glu67, and Asp139. Mg(2+) is bound by residues Asp8, Glu67, and Asp139.

Belongs to the RuvC family. As to quaternary structure, homodimer which binds Holliday junction (HJ) DNA. The HJ becomes 2-fold symmetrical on binding to RuvC with unstacked arms; it has a different conformation from HJ DNA in complex with RuvA. In the full resolvosome a probable DNA-RuvA(4)-RuvB(12)-RuvC(2) complex forms which resolves the HJ. Requires Mg(2+) as cofactor.

It is found in the cytoplasm. The catalysed reaction is Endonucleolytic cleavage at a junction such as a reciprocal single-stranded crossover between two homologous DNA duplexes (Holliday junction).. Its function is as follows. The RuvA-RuvB-RuvC complex processes Holliday junction (HJ) DNA during genetic recombination and DNA repair. Endonuclease that resolves HJ intermediates. Cleaves cruciform DNA by making single-stranded nicks across the HJ at symmetrical positions within the homologous arms, yielding a 5'-phosphate and a 3'-hydroxyl group; requires a central core of homology in the junction. The consensus cleavage sequence is 5'-(A/T)TT(C/G)-3'. Cleavage occurs on the 3'-side of the TT dinucleotide at the point of strand exchange. HJ branch migration catalyzed by RuvA-RuvB allows RuvC to scan DNA until it finds its consensus sequence, where it cleaves and resolves the cruciform DNA. This chain is Crossover junction endodeoxyribonuclease RuvC, found in Cronobacter sakazakii (strain ATCC BAA-894) (Enterobacter sakazakii).